The chain runs to 311 residues: Ribosomal RNA small subunit methyltransferase H (311 aa).

Residues 35 to 37, D55, F80, D102, and Q109 contribute to the S-adenosyl-L-methionine site; that span reads GGH.

This sequence belongs to the methyltransferase superfamily. RsmH family.

It is found in the cytoplasm. It catalyses the reaction cytidine(1402) in 16S rRNA + S-adenosyl-L-methionine = N(4)-methylcytidine(1402) in 16S rRNA + S-adenosyl-L-homocysteine + H(+). In terms of biological role, specifically methylates the N4 position of cytidine in position 1402 (C1402) of 16S rRNA. This Pseudoalteromonas atlantica (strain T6c / ATCC BAA-1087) protein is Ribosomal RNA small subunit methyltransferase H.